Reading from the N-terminus, the 445-residue chain is Phosphoglucosamine mutase (445 aa).

The Phosphoserine intermediate role is filled by S102. Residues S102, D241, D243, and D245 each contribute to the Mg(2+) site. S102 carries the post-translational modification Phosphoserine.

Belongs to the phosphohexose mutase family. The cofactor is Mg(2+). Activated by phosphorylation.

The catalysed reaction is alpha-D-glucosamine 1-phosphate = D-glucosamine 6-phosphate. Catalyzes the conversion of glucosamine-6-phosphate to glucosamine-1-phosphate. This chain is Phosphoglucosamine mutase, found in Pectobacterium atrosepticum (strain SCRI 1043 / ATCC BAA-672) (Erwinia carotovora subsp. atroseptica).